Reading from the N-terminus, the 360-residue chain is S-adenosylmethionine:tRNA ribosyltransferase-isomerase (360 aa).

It belongs to the QueA family. In terms of assembly, monomer.

The protein resides in the cytoplasm. The catalysed reaction is 7-aminomethyl-7-carbaguanosine(34) in tRNA + S-adenosyl-L-methionine = epoxyqueuosine(34) in tRNA + adenine + L-methionine + 2 H(+). Its pathway is tRNA modification; tRNA-queuosine biosynthesis. Its function is as follows. Transfers and isomerizes the ribose moiety from AdoMet to the 7-aminomethyl group of 7-deazaguanine (preQ1-tRNA) to give epoxyqueuosine (oQ-tRNA). This chain is S-adenosylmethionine:tRNA ribosyltransferase-isomerase, found in Burkholderia pseudomallei (strain 1106a).